We begin with the raw amino-acid sequence, 594 residues long: MSDSVSISVPYRNLRKEIELETVTKHRQNESGSSSFSESASPSNHSDSADGESVSKNCSLVTLVLSCTVAAGVQFGWALQLSLLTPYIQTLGISHAFSSFIWLCGPITGLVVQPFVGIWSDKCTSKYGRRRPFILVGSFMISIAVIIIGFSADIGYLLGDSKEHCSTFKGTRTRAAVVFIIGFWLLDLANNTVQGPARALLADLSGPDQRNTANAVFCLWMAIGNILGFSAGASGKWQEWFPFLTSRACCAACGNLKAAFLLAVVFLTICTLVTIYFAKEIPFTSNKPTRIQDSAPLLDDLQSKGLEHSKLNNGTANGIKYERVERDTDEQFGNSENEHQDETYVDGPGSVLVNLLTSLRHLPPAMHSVLIVMALTWLSWFPFFLFDTDWMGREVYHGDPTGDSLHMELYDQGVREGALGLLLNSVVLGISSFLIEPMCQRMGARVVWALSNFTVFACMAGTAVISLMSLSDDKNGIEYIMRGNETTRTAAVIVFALLGFPLAITYSVPFSVTAEVTADSGGGQGLAIGVLNLAIVIPQMIVSLGAGPWDQLFGGGNLPAFVLASVAAFAAGVIALQRLPTLSSSFKSTGFHIG.

S2 is modified (N-acetylserine). Residues 2 to 58 (SDSVSISVPYRNLRKEIELETVTKHRQNESGSSSFSESASPSNHSDSADGESVSKNC) are Cytoplasmic-facing. The tract at residues 23-50 (VTKHRQNESGSSSFSESASPSNHSDSAD) is disordered. Over residues 31–46 (SGSSSFSESASPSNHS) the composition is skewed to low complexity. Residues 59-79 (SLVTLVLSCTVAAGVQFGWAL) traverse the membrane as a helical segment. At 80–98 (QLSLLTPYIQTLGISHAFS) the chain is on the extracellular side. Residues 99–119 (SFIWLCGPITGLVVQPFVGIW) form a helical membrane-spanning segment. Over 120–131 (SDKCTSKYGRRR) the chain is Cytoplasmic. A helical membrane pass occupies residues 132 to 152 (PFILVGSFMISIAVIIIGFSA). The Extracellular segment spans residues 153 to 174 (DIGYLLGDSKEHCSTFKGTRTR). The chain crosses the membrane as a helical span at residues 175 to 195 (AAVVFIIGFWLLDLANNTVQG). Residues 196 to 214 (PARALLADLSGPDQRNTAN) lie on the Cytoplasmic side of the membrane. The chain crosses the membrane as a helical span at residues 215–235 (AVFCLWMAIGNILGFSAGASG). Residues 236-257 (KWQEWFPFLTSRACCAACGNLK) lie on the Extracellular side of the membrane. The helical transmembrane segment at 258-278 (AAFLLAVVFLTICTLVTIYFA) threads the bilayer. Over 279 to 365 (KEIPFTSNKP…LTSLRHLPPA (87 aa)) the chain is Cytoplasmic. The helical transmembrane segment at 366 to 386 (MHSVLIVMALTWLSWFPFFLF) threads the bilayer. The Extracellular portion of the chain corresponds to 387-417 (DTDWMGREVYHGDPTGDSLHMELYDQGVREG). The helical transmembrane segment at 418–438 (ALGLLLNSVVLGISSFLIEPM) threads the bilayer. Topologically, residues 439-445 (CQRMGAR) are cytoplasmic. Residues 446-466 (VVWALSNFTVFACMAGTAVIS) form a helical membrane-spanning segment. Topologically, residues 467–489 (LMSLSDDKNGIEYIMRGNETTRT) are extracellular. The N-linked (GlcNAc...) asparagine glycan is linked to N484. Residues 490–510 (AAVIVFALLGFPLAITYSVPF) traverse the membrane as a helical segment. Residues 511–525 (SVTAEVTADSGGGQG) are Cytoplasmic-facing. A helical transmembrane segment spans residues 526–546 (LAIGVLNLAIVIPQMIVSLGA). The Extracellular portion of the chain corresponds to 547 to 555 (GPWDQLFGG). The helical transmembrane segment at 556–576 (GNLPAFVLASVAAFAAGVIAL) threads the bilayer. The Cytoplasmic segment spans residues 577–594 (QRLPTLSSSFKSTGFHIG).

The protein belongs to the glycoside-pentoside-hexuronide (GPH) cation symporter transporter (TC 2.A.2.4) family. In terms of assembly, homodimer. Interacts with SUC2 and SUC4. In terms of tissue distribution, mostly localized in parenchymatic cells next to vascular tissues (at protein level). Present in stipules, trichomes, hydathodes and guard cells of source leaves, as well as in lateral root tips and flowers.

It is found in the cell membrane. It carries out the reaction sucrose(out) + H(+)(out) = sucrose(in) + H(+)(in). Its pathway is glycan biosynthesis; sucrose metabolism. Its activity is regulated as follows. Inhibited by protonophores (e.g. dinitrophenol and carbonyl cyanide m-chlorophenyl-hydrazone (CCCP)) and SH group inhibitors (e.g. p-chloromercuribenzene sulphonic acid (PCMBS)). In terms of biological role, responsible for the transport of sucrose into the cell, with the concomitant uptake of protons (symport system). Can also transport maltose at a lesser rate. May also transport biotin. Probably involved in carpel maturation that leads to pod shatter and seed dispersal. This is Sucrose transport protein SUC3 from Arabidopsis thaliana (Mouse-ear cress).